The following is a 54-amino-acid chain: Ribulose bisphosphate carboxylase large chain (54 aa).

Positions 1 to 2 (MS) are excised as a propeptide. An N-acetylproline modification is found at proline 3. Lysine 14 is subject to N6,N6,N6-trimethyllysine.

Belongs to the RuBisCO large chain family. Type I subfamily. Heterohexadecamer of 8 large chains and 8 small chains.

It localises to the plastid. The protein localises to the chloroplast. It catalyses the reaction 2 (2R)-3-phosphoglycerate + 2 H(+) = D-ribulose 1,5-bisphosphate + CO2 + H2O. It carries out the reaction D-ribulose 1,5-bisphosphate + O2 = 2-phosphoglycolate + (2R)-3-phosphoglycerate + 2 H(+). In terms of biological role, ruBisCO catalyzes two reactions: the carboxylation of D-ribulose 1,5-bisphosphate, the primary event in carbon dioxide fixation, as well as the oxidative fragmentation of the pentose substrate in the photorespiration process. Both reactions occur simultaneously and in competition at the same active site. In Ilex ciliospinosa (Sichuan holly), this protein is Ribulose bisphosphate carboxylase large chain (rbcL).